The chain runs to 364 residues: Aminomethyltransferase (364 aa).

Belongs to the GcvT family. The glycine cleavage system is composed of four proteins: P, T, L and H.

The enzyme catalyses N(6)-[(R)-S(8)-aminomethyldihydrolipoyl]-L-lysyl-[protein] + (6S)-5,6,7,8-tetrahydrofolate = N(6)-[(R)-dihydrolipoyl]-L-lysyl-[protein] + (6R)-5,10-methylene-5,6,7,8-tetrahydrofolate + NH4(+). Functionally, the glycine cleavage system catalyzes the degradation of glycine. The chain is Aminomethyltransferase from Citrobacter koseri (strain ATCC BAA-895 / CDC 4225-83 / SGSC4696).